Consider the following 640-residue polypeptide: Threonine--tRNA ligase (640 aa).

Residues 1-61 (MPIITLPDGS…DHDATLQIIT (61 aa)) form the TGS domain. Positions 242-533 (DHRKLGKRLD…LIEHYEGAFP (292 aa)) are catalytic. 3 residues coordinate Zn(2+): C333, H384, and H510.

It belongs to the class-II aminoacyl-tRNA synthetase family. In terms of assembly, homodimer. Requires Zn(2+) as cofactor.

It localises to the cytoplasm. It carries out the reaction tRNA(Thr) + L-threonine + ATP = L-threonyl-tRNA(Thr) + AMP + diphosphate + H(+). Its function is as follows. Catalyzes the attachment of threonine to tRNA(Thr) in a two-step reaction: L-threonine is first activated by ATP to form Thr-AMP and then transferred to the acceptor end of tRNA(Thr). Also edits incorrectly charged L-seryl-tRNA(Thr). The polypeptide is Threonine--tRNA ligase (Azotobacter vinelandii (strain DJ / ATCC BAA-1303)).